An 83-amino-acid chain; its full sequence is Small ribosomal subunit protein eS21 (83 aa).

Methionine 1 is subject to N-acetylmethionine. At lysine 81 the chain carries N6-acetyllysine.

This sequence belongs to the eukaryotic ribosomal protein eS21 family. In terms of assembly, component of the 40S small ribosomal subunit.

The protein resides in the cytoplasm. The protein localises to the cytosol. Its subcellular location is the rough endoplasmic reticulum. Functionally, component of the small ribosomal subunit. The ribosome is a large ribonucleoprotein complex responsible for the synthesis of proteins in the cell. This chain is Small ribosomal subunit protein eS21 (Rps21), found in Mus musculus (Mouse).